The sequence spans 359 residues: 4-hydroxy-3-methylbut-2-en-1-yl diphosphate synthase (flavodoxin) (359 aa).

The [4Fe-4S] cluster site is built by Cys264, Cys267, Cys299, and Glu306.

It belongs to the IspG family. The cofactor is [4Fe-4S] cluster.

The enzyme catalyses (2E)-4-hydroxy-3-methylbut-2-enyl diphosphate + oxidized [flavodoxin] + H2O + 2 H(+) = 2-C-methyl-D-erythritol 2,4-cyclic diphosphate + reduced [flavodoxin]. Its pathway is isoprenoid biosynthesis; isopentenyl diphosphate biosynthesis via DXP pathway; isopentenyl diphosphate from 1-deoxy-D-xylulose 5-phosphate: step 5/6. Functionally, converts 2C-methyl-D-erythritol 2,4-cyclodiphosphate (ME-2,4cPP) into 1-hydroxy-2-methyl-2-(E)-butenyl 4-diphosphate. This Helicobacter pylori (strain J99 / ATCC 700824) (Campylobacter pylori J99) protein is 4-hydroxy-3-methylbut-2-en-1-yl diphosphate synthase (flavodoxin).